The primary structure comprises 900 residues: Vacuolar membrane protein pep3 (900 aa).

A disordered region spans residues 1–20; that stretch reads MSLAEDWIDPNSSEDSDIQE. TPR repeat units follow at residues 314–345, 373–406, 408–436, and 546–579; these read HLAF…SPHE, NNET…NTVL, GYAE…VEEV, and MKDQ…ETLI. The stretch at 602–756 is one CHCR repeat; that stretch reads DLDVHALIPS…MFSKKSGIKE (155 aa). The RING-type; atypical zinc finger occupies 837–884; sequence CWHCNQPLFSEPFVLFPCQHAFHRSCMLEKTYKLASEKNILKECQLCG.

The protein belongs to the VPS18 family.

It localises to the vacuole membrane. Its function is as follows. Required for vacuolar biogenesis. In Schizosaccharomyces pombe (strain 972 / ATCC 24843) (Fission yeast), this protein is Vacuolar membrane protein pep3 (pep3).